We begin with the raw amino-acid sequence, 261 residues long: Protein LIKE COV 2 (261 aa).

Positions 1-38 (MAEGKEATTSSLSQGLTPHQDPDDAPKSPPNSPNSSTR) are disordered. Residues 1-56 (MAEGKEATTSSLSQGLTPHQDPDDAPKSPPNSPNSSTRKACYGVLQSWVSKKFMTG) lie on the Cytoplasmic side of the membrane. Polar residues predominate over residues 7 to 17 (ATTSSLSQGLT). The chain crosses the membrane as a helical span at residues 57 to 77 (FVVLFPVAVTFLITWWFIQFV). Over 78-91 (DGFFSPIYENLGVD) the chain is Extracellular. The helical transmembrane segment at 92–112 (IFGLGFITSVLFTFFVGIFAS) threads the bilayer. Residues 113 to 261 (SWLGSTVFWL…HSLRVPLNRL (149 aa)) are Cytoplasmic-facing.

Belongs to the plant COV1 protein family.

The protein localises to the membrane. This chain is Protein LIKE COV 2, found in Arabidopsis thaliana (Mouse-ear cress).